The sequence spans 190 residues: CASP-like protein 2U1 (190 aa).

Topologically, residues 1-16 are cytoplasmic; the sequence is MAFTSLLGSDAERKVA. A helical transmembrane segment spans residues 17–37; that stretch reads VAEVALRAVLCGLGALAAALV. At 38-59 the chain is on the extracellular side; the sequence is ATDTQTRTFFSLQKKATYTDMK. The helical transmembrane segment at 60 to 80 threads the bilayer; the sequence is AMVLLVAAAAAAAGYSLLQAA. Over 81–100 the chain is Cytoplasmic; sequence RCCCCVALLRTSIRPRARLL. The chain crosses the membrane as a helical span at residues 101–121; sequence LAWCVFACDQALAYALLAAVV. Topologically, residues 122-152 are extracellular; sequence AALQASVVAKQGLPQLQWMAICALYGAFCRQ. Residues 153-173 form a helical membrane-spanning segment; the sequence is AGAGVACAVAAAVDAALLAFL. At 174–190 the chain is on the cytoplasmic side; that stretch reads SAFNLFRLYGAKATTTT.

This sequence belongs to the Casparian strip membrane proteins (CASP) family. Homodimer and heterodimers.

Its subcellular location is the cell membrane. This is CASP-like protein 2U1 from Zea mays (Maize).